Reading from the N-terminus, the 192-residue chain is Peptidyl-tRNA hydrolase (192 aa).

Residue Tyr-17 participates in tRNA binding. His-22 serves as the catalytic Proton acceptor. 3 residues coordinate tRNA: Tyr-68, Asn-70, and Asn-116.

Belongs to the PTH family. In terms of assembly, monomer.

It localises to the cytoplasm. The enzyme catalyses an N-acyl-L-alpha-aminoacyl-tRNA + H2O = an N-acyl-L-amino acid + a tRNA + H(+). In terms of biological role, hydrolyzes ribosome-free peptidyl-tRNAs (with 1 or more amino acids incorporated), which drop off the ribosome during protein synthesis, or as a result of ribosome stalling. Catalyzes the release of premature peptidyl moieties from peptidyl-tRNA molecules trapped in stalled 50S ribosomal subunits, and thus maintains levels of free tRNAs and 50S ribosomes. The polypeptide is Peptidyl-tRNA hydrolase (Mycolicibacterium gilvum (strain PYR-GCK) (Mycobacterium gilvum (strain PYR-GCK))).